Reading from the N-terminus, the 417-residue chain is Gamma-glutamyl phosphate reductase (417 aa).

It belongs to the gamma-glutamyl phosphate reductase family.

It is found in the cytoplasm. The catalysed reaction is L-glutamate 5-semialdehyde + phosphate + NADP(+) = L-glutamyl 5-phosphate + NADPH + H(+). It functions in the pathway amino-acid biosynthesis; L-proline biosynthesis; L-glutamate 5-semialdehyde from L-glutamate: step 2/2. Its function is as follows. Catalyzes the NADPH-dependent reduction of L-glutamate 5-phosphate into L-glutamate 5-semialdehyde and phosphate. The product spontaneously undergoes cyclization to form 1-pyrroline-5-carboxylate. This chain is Gamma-glutamyl phosphate reductase, found in Pectobacterium carotovorum subsp. carotovorum (strain PC1).